The following is a 494-amino-acid chain: Glycerol kinase (494 aa).

T13 contributes to the ADP binding site. ATP contacts are provided by T13, T14, and S15. T13 provides a ligand contact to sn-glycerol 3-phosphate. R17 provides a ligand contact to ADP. Sn-glycerol 3-phosphate-binding residues include R83, E84, Y135, and D244. Glycerol contacts are provided by R83, E84, Y135, D244, and Q245. The ADP site is built by T266 and G309. ATP-binding residues include T266, G309, Q313, and G410. Positions 410 and 414 each coordinate ADP.

Belongs to the FGGY kinase family.

It catalyses the reaction glycerol + ATP = sn-glycerol 3-phosphate + ADP + H(+). It participates in polyol metabolism; glycerol degradation via glycerol kinase pathway; sn-glycerol 3-phosphate from glycerol: step 1/1. With respect to regulation, inhibited by fructose 1,6-bisphosphate (FBP). Its function is as follows. Key enzyme in the regulation of glycerol uptake and metabolism. Catalyzes the phosphorylation of glycerol to yield sn-glycerol 3-phosphate. This is Glycerol kinase from Shewanella putrefaciens (strain CN-32 / ATCC BAA-453).